We begin with the raw amino-acid sequence, 344 residues long: Glyceraldehyde-3-phosphate dehydrogenase (344 aa).

NAD(+) is bound by residues 11–12 and G110; that span reads TI. 139–141 serves as a coordination point for D-glyceraldehyde 3-phosphate; it reads SCN. Catalysis depends on C140, which acts as the Nucleophile. R169 is a binding site for NAD(+). Position 195 to 196 (195 to 196) interacts with D-glyceraldehyde 3-phosphate; that stretch reads HG. Q302 is an NAD(+) binding site.

This sequence belongs to the glyceraldehyde-3-phosphate dehydrogenase family. As to quaternary structure, homotetramer.

Its subcellular location is the cytoplasm. The enzyme catalyses D-glyceraldehyde 3-phosphate + phosphate + NADP(+) = (2R)-3-phospho-glyceroyl phosphate + NADPH + H(+). It carries out the reaction D-glyceraldehyde 3-phosphate + phosphate + NAD(+) = (2R)-3-phospho-glyceroyl phosphate + NADH + H(+). It functions in the pathway carbohydrate degradation; glycolysis; pyruvate from D-glyceraldehyde 3-phosphate: step 1/5. This chain is Glyceraldehyde-3-phosphate dehydrogenase, found in Pyrobaculum islandicum (strain DSM 4184 / JCM 9189 / GEO3).